The sequence spans 257 residues: tRNA (guanine-N(7)-)-methyltransferase (257 aa).

Positions 1-12 are enriched in acidic residues; sequence MARDSEDQDMET. Residues 1–25 are disordered; the sequence is MARDSEDQDMETETNGAAEGLDPTS. S-adenosyl-L-methionine is bound by residues G80, 103-104, 138-139, and L158; these read EI and NA. The active site involves D161. Residue 236 to 238 participates in S-adenosyl-L-methionine binding; it reads SEE.

The protein belongs to the class I-like SAM-binding methyltransferase superfamily. TrmB family.

The protein localises to the nucleus. It carries out the reaction guanosine(46) in tRNA + S-adenosyl-L-methionine = N(7)-methylguanosine(46) in tRNA + S-adenosyl-L-homocysteine. Its pathway is tRNA modification; N(7)-methylguanine-tRNA biosynthesis. Its function is as follows. Catalyzes the formation of N(7)-methylguanine at position 46 (m7G46) in tRNA. This Drosophila ananassae (Fruit fly) protein is tRNA (guanine-N(7)-)-methyltransferase.